The sequence spans 195 residues: Matrix protein (195 aa).

The protein belongs to the novirhabdovirus matrix protein family. As to quaternary structure, homomultimer.

The protein resides in the virion. It localises to the host cytoplasm. The M protein has a crucial role in virus assembly and interacts with the RNP complex as well as with the viral membrane. The protein is Matrix protein (M) of Salmo (IHNV).